A 141-amino-acid chain; its full sequence is Transcription antitermination protein NusB (141 aa).

The protein belongs to the NusB family.

In terms of biological role, involved in transcription antitermination. Required for transcription of ribosomal RNA (rRNA) genes. Binds specifically to the boxA antiterminator sequence of the ribosomal RNA (rrn) operons. The protein is Transcription antitermination protein NusB of Clostridium botulinum (strain Loch Maree / Type A3).